A 363-amino-acid chain; its full sequence is Exopolygalacturonase rpg13 (363 aa).

Positions 1-26 (MVKFLSLTSSVTALLLLSLGANGVAA) are cleaved as a signal peptide. Asn121, Asn142, and Asn150 each carry an N-linked (GlcNAc...) asparagine glycan. PbH1 repeat units lie at residues 143–173 (ATDV…DVSR), 174–195 (SSNV…AINE), 197–217 (VTNV…SVGS), 227–248 (VKTV…RIKT), and 256–277 (VSDI…LITT). Asp188 functions as the Proton donor in the catalytic mechanism. Residues Cys190 and Cys207 are joined by a disulfide bond. Asn199 carries an N-linked (GlcNAc...) asparagine glycan. Residue His211 is part of the active site. A glycan (N-linked (GlcNAc...) asparagine) is linked at Asn321. Residues Cys322 and Cys328 are joined by a disulfide bond. The stretch at 328–354 (CTDFTLSGVKITKASNTPKNVCVNLDG) is one PbH1 6 repeat.

Belongs to the glycosyl hydrolase 28 family. Post-translationally, N-glycosylated.

It localises to the secreted. The enzyme catalyses [(1-&gt;4)-alpha-D-galacturonosyl](n) + H2O = alpha-D-galacturonate + [(1-&gt;4)-alpha-D-galacturonosyl](n-1). Its function is as follows. Specific in hydrolyzing the terminal glycosidic bond of polygalacturonic acid and oligogalacturonates. Has no activity towards trigalacturonic acid. This chain is Exopolygalacturonase rpg13, found in Rhizopus delemar (strain RA 99-880 / ATCC MYA-4621 / FGSC 9543 / NRRL 43880) (Mucormycosis agent).